Reading from the N-terminus, the 108-residue chain is Insulin (108 aa).

A signal peptide spans 1–21 (MAVWLQAGALLVLLVVSSVST). 3 cysteine pairs are disulfide-bonded: cysteine 30/cysteine 94, cysteine 42/cysteine 107, and cysteine 93/cysteine 98. A propeptide spans 54–84 (DVEPLLGFLPPKSAQETEVADFAFKDHAELI) (c peptide).

This sequence belongs to the insulin family. Heterodimer of a B chain and an A chain linked by two disulfide bonds.

The protein localises to the secreted. Its function is as follows. Insulin decreases blood glucose concentration. It increases cell permeability to monosaccharides, amino acids and fatty acids. It accelerates glycolysis, the pentose phosphate cycle, and glycogen synthesis in liver. The protein is Insulin (ins) of Danio rerio (Zebrafish).